Consider the following 416-residue polypeptide: Pre-mRNA-splicing factor slu-7 (416 aa).

The segment at 1–34 is disordered; it reads MPPPPPNRREQATAAPSSTDKSETGAGAARKEDN. Residues 95 to 112 form a CCHC-type zinc finger; sequence GACENCGAMGHKKKDCLE. Basic and acidic residues-rich tracts occupy residues 168-179 and 188-213; these read RRALQGDQKTPD and DDKSGFKYDEESDMGRDRATTKQSMR. The interval 168–213 is disordered; the sequence is RRALQGDQKTPDGEGADGPEDDKSGFKYDEESDMGRDRATTKQSMR.

This sequence belongs to the SLU7 family. In terms of assembly, associated with the spliceosome.

It is found in the nucleus. In terms of biological role, involved in pre-mRNA splicing. This is Pre-mRNA-splicing factor slu-7 (slu-7) from Neurospora crassa (strain ATCC 24698 / 74-OR23-1A / CBS 708.71 / DSM 1257 / FGSC 987).